We begin with the raw amino-acid sequence, 211 residues long: FMN-dependent NADH:quinone oxidoreductase 3 (211 aa).

102-105 (MWNF) provides a ligand contact to FMN.

Belongs to the azoreductase type 1 family. Homodimer. It depends on FMN as a cofactor.

It catalyses the reaction 2 a quinone + NADH + H(+) = 2 a 1,4-benzosemiquinone + NAD(+). The catalysed reaction is N,N-dimethyl-1,4-phenylenediamine + anthranilate + 2 NAD(+) = 2-(4-dimethylaminophenyl)diazenylbenzoate + 2 NADH + 2 H(+). In terms of biological role, quinone reductase that provides resistance to thiol-specific stress caused by electrophilic quinones. Functionally, also exhibits azoreductase activity. Catalyzes the reductive cleavage of the azo bond in aromatic azo compounds to the corresponding amines. The sequence is that of FMN-dependent NADH:quinone oxidoreductase 3 from Bacillus anthracis.